The primary structure comprises 56 residues: Bowman-Birk type proteinase inhibitor I-2B (56 aa).

4 cysteine pairs are disulfide-bonded: C10–C25, C15–C23, C32–C39, and C36–C51.

The protein belongs to the Bowman-Birk serine protease inhibitor family.

In Triticum aestivum (Wheat), this protein is Bowman-Birk type proteinase inhibitor I-2B.